The sequence spans 548 residues: Folylpolyglutamate synthase (548 aa).

130–133 (GKGS) provides a ligand contact to ATP. The Mg(2+) site is built by serine 157, glutamate 234, and histidine 262. Arginine 382 and aspartate 396 together coordinate ATP.

It belongs to the folylpolyglutamate synthase family. Requires a monovalent cation as cofactor.

It is found in the mitochondrion inner membrane. It localises to the mitochondrion matrix. The protein resides in the cytoplasm. It carries out the reaction (6S)-5,6,7,8-tetrahydrofolyl-(gamma-L-Glu)(n) + L-glutamate + ATP = (6S)-5,6,7,8-tetrahydrofolyl-(gamma-L-Glu)(n+1) + ADP + phosphate + H(+). Its pathway is cofactor biosynthesis; tetrahydrofolylpolyglutamate biosynthesis. Catalyzes conversion of folates to polyglutamate derivatives allowing concentration of folate compounds in the cell and the intracellular retention of these cofactors, which are important substrates for most of the folate-dependent enzymes that are involved in one-carbon transfer reactions involved in purine, pyrimidine and amino acid synthesis. Required for methionine synthesis and maintenance of intact mitochondrial DNA. Involved in telomere maintenance. The chain is Folylpolyglutamate synthase from Saccharomyces cerevisiae (strain AWRI1631) (Baker's yeast).